The following is a 262-amino-acid chain: Putative outer membrane protein CPn_1034/CP_0818/CPj1034/CpB1074 (262 aa).

The signal sequence occupies residues 1 to 17 (MKTWLFFTFLFSCSSFY).

The protein resides in the cell outer membrane. This chain is Putative outer membrane protein CPn_1034/CP_0818/CPj1034/CpB1074, found in Chlamydia pneumoniae (Chlamydophila pneumoniae).